A 240-amino-acid chain; its full sequence is MKSVILASIAAMFATSAMAADVVVSEPSAPTAAPVDTFSWTGGYIGINAGYAGGKFKHPFSSFDKEDNEQVSGSLDVTAGGFVGGVQAGYNWQLDNGVVLGAETDFQGSSVTGSISAGASGLEGKAETKVEWFGTVRARLGYTATERLMVYGTGGLAYGKVKSAFNLGDDASALHTWSDKTKAGWTLGAGAEYAINNNWTLKSEYLYTDLGKRNLVDVDNSFLESKVNFHTVRVGLNYKF.

A signal peptide spans Met-1–Ala-19. An epitope recognized by the monoclonal antibody A59/10F09/G10 region spans residues Asn-48–Val-83.

It belongs to the Omp25/RopB family. In terms of assembly, oligomeric.

The protein localises to the cell outer membrane. In terms of biological role, major outer membrane protein associated with peptidoglycans. May function as a porin. In Brucella melitensis biotype 1 (strain ATCC 23456 / CCUG 17765 / NCTC 10094 / 16M), this protein is 31 kDa outer-membrane immunogenic protein (omp31).